A 367-amino-acid chain; its full sequence is Cobalt-precorrin-5B C(1)-methyltransferase (367 aa).

This sequence belongs to the CbiD family.

It catalyses the reaction Co-precorrin-5B + S-adenosyl-L-methionine = Co-precorrin-6A + S-adenosyl-L-homocysteine. The protein operates within cofactor biosynthesis; adenosylcobalamin biosynthesis; cob(II)yrinate a,c-diamide from sirohydrochlorin (anaerobic route): step 6/10. Its function is as follows. Catalyzes the methylation of C-1 in cobalt-precorrin-5B to form cobalt-precorrin-6A. The chain is Cobalt-precorrin-5B C(1)-methyltransferase from Leptospira interrogans serogroup Icterohaemorrhagiae serovar Lai (strain 56601).